The primary structure comprises 37 residues: Esculentin-2Ra (37 aa).

A disulfide bridge connects residues C31 and C37.

In terms of tissue distribution, expressed by the skin glands.

It is found in the secreted. Its function is as follows. Antimicrobial peptide. The protein is Esculentin-2Ra of Pelophylax ridibundus (Marsh frog).